The sequence spans 950 residues: Leucine--tRNA ligase (950 aa).

The short motif at 72 to 83 is the 'HIGH' region element; sequence PYPSGEGLHVGH. The 'KMSKS' region motif lies at 722 to 726; the sequence is KIGKS. Residue Lys725 participates in ATP binding.

It belongs to the class-I aminoacyl-tRNA synthetase family.

Its subcellular location is the cytoplasm. It catalyses the reaction tRNA(Leu) + L-leucine + ATP = L-leucyl-tRNA(Leu) + AMP + diphosphate. This Mycobacterium sp. (strain KMS) protein is Leucine--tRNA ligase.